Consider the following 150-residue polypeptide: 3-hydroxyacyl-[acyl-carrier-protein] dehydratase FabZ (150 aa).

The active site involves His54.

The protein belongs to the thioester dehydratase family. FabZ subfamily.

Its subcellular location is the cytoplasm. It carries out the reaction a (3R)-hydroxyacyl-[ACP] = a (2E)-enoyl-[ACP] + H2O. Its function is as follows. Involved in unsaturated fatty acids biosynthesis. Catalyzes the dehydration of short chain beta-hydroxyacyl-ACPs and long chain saturated and unsaturated beta-hydroxyacyl-ACPs. This is 3-hydroxyacyl-[acyl-carrier-protein] dehydratase FabZ from Vibrio parahaemolyticus serotype O3:K6 (strain RIMD 2210633).